Consider the following 1507-residue polypeptide: DNA-directed RNA polymerase subunit beta' (1507 aa).

Residues C71, C73, C86, and C89 each coordinate Zn(2+). Mg(2+)-binding residues include D470, D472, and D474. Positions 800, 874, 881, and 884 each coordinate Zn(2+).

Belongs to the RNA polymerase beta' chain family. In terms of assembly, the RNAP catalytic core consists of 2 alpha, 1 beta, 1 beta' and 1 omega subunit. When a sigma factor is associated with the core the holoenzyme is formed, which can initiate transcription. Requires Mg(2+) as cofactor. The cofactor is Zn(2+).

The enzyme catalyses RNA(n) + a ribonucleoside 5'-triphosphate = RNA(n+1) + diphosphate. DNA-dependent RNA polymerase catalyzes the transcription of DNA into RNA using the four ribonucleoside triphosphates as substrates. This Nitratiruptor sp. (strain SB155-2) protein is DNA-directed RNA polymerase subunit beta'.